The chain runs to 735 residues: Serine/threonine-protein kinase BRSK2 (735 aa).

A Protein kinase domain is found at 20 to 271; the sequence is YRLEKTLGKG…LEHIQKHIWY (252 aa). Residues 26–34 and K49 each bind ATP; that span reads LGKGQTGLV. D142 acts as the Proton acceptor in catalysis. T175 is modified (phosphothreonine; by LKB1). At T261 the chain carries Phosphothreonine; by PKA. S295 is subject to Phosphoserine. Residues 298–340 enclose the UBA domain; that stretch reads DIDPDVLDSMHSLGCFRDRNKLLQDLLSEEENQEKMIYFLLLD. A compositionally biased stretch (basic and acidic residues) spans 346–367; it reads PSHEDEDLPPRNEIDPPRKRVD. Disordered regions lie at residues 346–476 and 492–516; these read PSHE…GVPW and RFHR…SSPE. Phosphoserine is present on residues S368, S383, S394, S413, S424, and S428. Over residues 411–429 the composition is skewed to low complexity; the sequence is SRSISGASSGLSTSPLSSP. Residues 432–446 are compositionally biased toward pro residues; the sequence is TPHPSPRGSPLPTPK. At S456 the chain carries Phosphoserine. 3 positions are modified to phosphothreonine: T460, T464, and T510. A phosphoserine mark is found at S513, S514, and S521. Residues 604–606 carry the KEN box motif; it reads KEN. Residues 682–735 form a disordered region; that stretch reads KNGQAAQAPSTPAKRSAHGPLGDSAAAGPGGDTEYPMGKDMAKMGPPAARREQP.

It belongs to the protein kinase superfamily. CAMK Ser/Thr protein kinase family. SNF1 subfamily. As to quaternary structure, interacts with FZR1, a regulatory subunit of the APC ubiquitin ligase complex. Interacts with COPS5. Interacts with PAK1. Mg(2+) serves as cofactor. Post-translationally, may be phosphorylated at Thr-261 by PKA. Phosphorylated at Thr-175 by STK11/LKB1 in complex with STE20-related adapter-alpha (STRADA) pseudo kinase and CAB39. Not phosphorylated at Thr-175 by CaMKK2. In contrast, it is phosphorylated and activated by CaMKK1. May be inactivated via dephosphorylation of Thr-175 by PP2C. In terms of processing, polyubiquitinated by the APC complex in conjunction with FZR1, leading to its proteasomal degradation. Targeted for proteasomal degradation by interaction with COPS5. BRSK2 levels change during the cell cycle. BRSK2 levels are low at the G1/S boundary and gradually increase as cells progress into G2 phase. BRSK2 levels decrease rapidly at the end of mitosis. As to expression, detected in pancreas islets and in brain (at protein level). Detected in brain and pancreas.

The protein resides in the cytoplasm. Its subcellular location is the cytoskeleton. It is found in the microtubule organizing center. The protein localises to the centrosome. It localises to the perinuclear region. The protein resides in the endoplasmic reticulum. It carries out the reaction L-seryl-[protein] + ATP = O-phospho-L-seryl-[protein] + ADP + H(+). The catalysed reaction is L-threonyl-[protein] + ATP = O-phospho-L-threonyl-[protein] + ADP + H(+). It catalyses the reaction L-seryl-[tau protein] + ATP = O-phospho-L-seryl-[tau protein] + ADP + H(+). The enzyme catalyses L-threonyl-[tau protein] + ATP = O-phospho-L-threonyl-[tau protein] + ADP + H(+). Its activity is regulated as follows. Activated by phosphorylation on Thr-175 by STK11/LKB1. Its function is as follows. Serine/threonine-protein kinase that plays a key role in polarization of neurons and axonogenesis, cell cycle progress and insulin secretion. Phosphorylates CDK16, CDC25C, MAPT/TAU, PAK1 and WEE1. Following phosphorylation and activation by STK11/LKB1, acts as a key regulator of polarization of cortical neurons, probably by mediating phosphorylation of microtubule-associated proteins such as MAPT/TAU at 'Thr-504' and 'Ser-554'. Also regulates neuron polarization by mediating phosphorylation of WEE1 at 'Ser-642' in post-mitotic neurons, leading to down-regulate WEE1 activity in polarized neurons. Plays a role in the regulation of the mitotic cell cycle progress and the onset of mitosis. Plays a role in the regulation of insulin secretion in response to elevated glucose levels, probably via phosphorylation of CDK16 and PAK1. While BRSK2 phosphorylated at Thr-175 can inhibit insulin secretion, BRSK2 phosphorylated at Thr-261 can promote insulin secretion. Regulates reorganization of the actin cytoskeleton. May play a role in the apoptotic response triggered by endoplasmic reticulum (ER) stress. This Mus musculus (Mouse) protein is Serine/threonine-protein kinase BRSK2 (Brsk2).